The sequence spans 464 residues: NAD(P) transhydrogenase subunit beta (464 aa).

Helical transmembrane passes span 54–74 (VQAYAWIVLAIAIGGAIGTVI), 86–106 (LVAAFHSLVGMAAVLVATGAL), 126–146 (VEMSLGLAVGAITFSGSVIAF), 164–184 (HPLNAVLGILLVVLLVVFAAT), 191–211 (FALMILAFALGFLLIIPIGGA), and 227–247 (AAAGIGFTLGNPLLIIAGALV). NADP(+) is bound by residues 316–317 (YG), 348–353 (VAGRMP), 390–394 (GANDV), 425–432 (KRSMASGY), and 451–452 (DA).

The protein belongs to the PNT beta subunit family. Complex of an alpha and a beta chain; in Rhodospirillum, the alpha chain seems to be made of two subunits.

The protein localises to the cell inner membrane. It carries out the reaction NAD(+) + NADPH + H(+)(in) = NADH + NADP(+) + H(+)(out). Its function is as follows. The transhydrogenation between NADH and NADP is coupled to respiration and ATP hydrolysis and functions as a proton pump across the membrane. The chain is NAD(P) transhydrogenase subunit beta (pntB) from Rhodospirillum rubrum (strain ATCC 11170 / ATH 1.1.1 / DSM 467 / LMG 4362 / NCIMB 8255 / S1).